A 122-amino-acid polypeptide reads, in one-letter code: Large ribosomal subunit protein uL14 (122 aa).

Belongs to the universal ribosomal protein uL14 family. As to quaternary structure, part of the 50S ribosomal subunit. Forms a cluster with proteins L3 and L19. In the 70S ribosome, L14 and L19 interact and together make contacts with the 16S rRNA in bridges B5 and B8.

In terms of biological role, binds to 23S rRNA. Forms part of two intersubunit bridges in the 70S ribosome. The chain is Large ribosomal subunit protein uL14 from Corynebacterium efficiens (strain DSM 44549 / YS-314 / AJ 12310 / JCM 11189 / NBRC 100395).